A 115-amino-acid chain; its full sequence is Large ribosomal subunit protein bL19 (115 aa).

The protein belongs to the bacterial ribosomal protein bL19 family.

This protein is located at the 30S-50S ribosomal subunit interface and may play a role in the structure and function of the aminoacyl-tRNA binding site. In Syntrophotalea carbinolica (strain DSM 2380 / NBRC 103641 / GraBd1) (Pelobacter carbinolicus), this protein is Large ribosomal subunit protein bL19.